The chain runs to 286 residues: D-tagatose-1,6-bisphosphate aldolase subunit KbaY (286 aa).

Residue aspartate 82 is the Proton donor of the active site. Zn(2+)-binding residues include histidine 83 and histidine 180. Glycine 181 lines the dihydroxyacetone phosphate pocket. Histidine 208 provides a ligand contact to Zn(2+). Residues 209–211 (GAS) and 230–233 (NVAT) contribute to the dihydroxyacetone phosphate site.

It belongs to the class II fructose-bisphosphate aldolase family. TagBP aldolase KbaY subfamily. Homotetramer. Forms a complex with KbaZ. Zn(2+) is required as a cofactor.

It catalyses the reaction D-tagatofuranose 1,6-bisphosphate = D-glyceraldehyde 3-phosphate + dihydroxyacetone phosphate. The protein operates within carbohydrate metabolism; D-tagatose 6-phosphate degradation; D-glyceraldehyde 3-phosphate and glycerone phosphate from D-tagatose 6-phosphate: step 2/2. Catalytic subunit of the tagatose-1,6-bisphosphate aldolase KbaYZ, which catalyzes the reversible aldol condensation of dihydroxyacetone phosphate (DHAP or glycerone-phosphate) with glyceraldehyde 3-phosphate (G3P) to produce tagatose 1,6-bisphosphate (TBP). Requires KbaZ subunit for full activity and stability. The polypeptide is D-tagatose-1,6-bisphosphate aldolase subunit KbaY (Escherichia coli O17:K52:H18 (strain UMN026 / ExPEC)).